The following is a 521-amino-acid chain: Nitric oxide reductase transcription regulator NorR2 (521 aa).

D56 carries the post-translational modification 4-aspartylphosphate. One can recognise a Sigma-54 factor interaction domain in the interval 193-422; that stretch reads IIGQSEAIAN…LEHVISRAAL (230 aa). Residues 221–228 and 293–302 contribute to the ATP site; these read GETGVGKE and EVGELPLAIQ. A DNA-binding region (H-T-H motif) is located at residues 497-516; that stretch reads WAQAARQLGIDASNLHKLAR.

Its pathway is nitrogen metabolism; nitrate reduction (denitrification) [regulation]. Functionally, required for the nitric oxide (NO) induced expression of NO reductase. Not required for expression of 2 other pathway members, nitrate reductase (nirS) and nitrous oxide reductase (nosZ). This Cupriavidus necator (strain ATCC 17699 / DSM 428 / KCTC 22496 / NCIMB 10442 / H16 / Stanier 337) (Ralstonia eutropha) protein is Nitric oxide reductase transcription regulator NorR2 (norR2).